Consider the following 236-residue polypeptide: Ribonuclease HIII (236 aa).

The region spanning 9–236 is the RNase H type-2 domain; it reads LYLIGSDESG…NVASFLKQLA (228 aa). The a divalent metal cation site is built by aspartate 15, glutamate 16, and aspartate 122.

The protein belongs to the RNase HII family. RnhC subfamily. A divalent metal cation serves as cofactor.

Its subcellular location is the cytoplasm. The enzyme catalyses Endonucleolytic cleavage to 5'-phosphomonoester.. Endonuclease that specifically degrades the RNA of RNA-DNA hybrids. This Mycoplasma pneumoniae (strain ATCC 29342 / M129 / Subtype 1) (Mycoplasmoides pneumoniae) protein is Ribonuclease HIII (rnhC).